We begin with the raw amino-acid sequence, 156 residues long: Ribosome maturation factor RimP (156 aa).

This sequence belongs to the RimP family.

The protein localises to the cytoplasm. Its function is as follows. Required for maturation of 30S ribosomal subunits. The polypeptide is Ribosome maturation factor RimP (Treponema pallidum (strain Nichols)).